An 88-amino-acid polypeptide reads, in one-letter code: Guanine nucleotide-binding protein subunit gamma (88 aa).

Cysteine 84 carries S-palmitoyl cysteine lipidation. Cysteine 85 carries the cysteine methyl ester modification. Residue cysteine 85 is the site of S-farnesyl cysteine attachment. The propeptide at threonine 86–methionine 88 is removed in mature form.

It belongs to the G protein gamma family. As to quaternary structure, g proteins are composed of 3 units, alpha, beta and gamma.

It localises to the membrane. In Candida glabrata (strain ATCC 2001 / BCRC 20586 / JCM 3761 / NBRC 0622 / NRRL Y-65 / CBS 138) (Yeast), this protein is Guanine nucleotide-binding protein subunit gamma.